The primary structure comprises 147 residues: Plasminogen receptor (KT) (147 aa).

At 1-52 (MGFIFSKSMNENMKNQQEFMVMHARLQLERQLIMQNEMRERQMAMQIAWSRE) the chain is on the extracellular side. A helical membrane pass occupies residues 53 to 73 (FLKYFGTFFGIATISLAAGAI). Topologically, residues 74-78 (KRKKP) are cytoplasmic. A helical membrane pass occupies residues 79 to 99 (AFLIPIVPLSFIFTYQYDLGY). At 100–147 (GTLLQRMKSEAEDILETEKTKLELPKGLITFESLEKARREQSKFFSDK) the chain is on the extracellular side.

As to quaternary structure, interacts with PLAT. Interacts with PLAUR. Expressed in adrenal medulla (pheochromocytoma).

Its subcellular location is the cell membrane. In terms of biological role, receptor for plasminogen. Regulates urokinase plasminogen activator-dependent and stimulates tissue-type plasminogen activator-dependent cell surface plasminogen activation. Proposed to be part of a local catecholaminergic cell plasminogen activation system that regulates neuroendocrine prohormone processing. Involved in regulation of inflammatory response; regulates monocyte chemotactic migration and matrix metalloproteinase activation, such as of MMP2 and MMP9. This Rattus norvegicus (Rat) protein is Plasminogen receptor (KT) (Plgrkt).